A 270-amino-acid polypeptide reads, in one-letter code: tRNA pseudouridine synthase A (270 aa).

The active-site Nucleophile is the Asp55. Tyr110 is a substrate binding site.

This sequence belongs to the tRNA pseudouridine synthase TruA family.

The catalysed reaction is uridine(38/39/40) in tRNA = pseudouridine(38/39/40) in tRNA. Functionally, formation of pseudouridine at positions 38, 39 and 40 in the anticodon stem and loop of transfer RNAs. The protein is tRNA pseudouridine synthase A of Methanoculleus marisnigri (strain ATCC 35101 / DSM 1498 / JR1).